The chain runs to 207 residues: Microtubule-associated protein Jupiter (207 aa).

At S30 the chain carries Phosphoserine. Phosphothreonine occurs at positions 41 and 102. Residues S111, S138, and S149 each carry the phosphoserine modification. 2 disordered regions span residues 129-174 (KGKY…YKAG) and 188-207 (GNQVINKNRVPPGGYSSGLW). Positions 136 to 149 (SGSVSSASSSVSSS) are enriched in low complexity. Residues 150–164 (TENLKINVGNRSDGN) show a composition bias toward polar residues.

The protein belongs to the MAP Jupiter family.

The protein localises to the nucleus. It is found in the cytoplasm. Its subcellular location is the cytoskeleton. It localises to the spindle. Its function is as follows. Binds to all microtubule populations. The polypeptide is Microtubule-associated protein Jupiter (Drosophila grimshawi (Hawaiian fruit fly)).